A 40-amino-acid chain; its full sequence is Alpha-conotoxin-like Lp1.6b (40 aa).

Residues 1–23 constitute a propeptide that is removed on maturation; the sequence is VVLGPASDGRNAAANNKASDLIR. Gln-24 carries the post-translational modification Pyrrolidone carboxylic acid. 2 disulfide bridges follow: Cys-26/Cys-32 and Cys-27/Cys-39.

The protein belongs to the conotoxin A superfamily. In terms of tissue distribution, expressed by the venom duct.

Its subcellular location is the secreted. Its function is as follows. Alpha-conotoxins act on postsynaptic membranes, they bind to the nicotinic acetylcholine receptors (nAChR) and thus inhibit them. This is Alpha-conotoxin-like Lp1.6b from Conus leopardus (Leopard cone).